Consider the following 246-residue polypeptide: E3 ubiquitin ligase TRIM40 (246 aa).

The RING-type zinc-finger motif lies at 12 to 55; it reads CPICLDPLKEAVSTDCRHLFCRMCLTQHMDKASVSGILSCPVCR. The B box-type zinc-finger motif lies at 64 to 105; it reads GDNYICHTHQKRVRRFCEASGHLLCEECLQSPEHQSHTELSI. Positions 69, 72, 91, and 97 each coordinate Zn(2+). A coiled-coil region spans residues 105-170; that stretch reads IENAISHYKE…DQTKEQLKAL (66 aa).

It belongs to the TRIM/RBCC family. In terms of assembly, interacts with NEDD8.

The catalysed reaction is S-ubiquitinyl-[E2 ubiquitin-conjugating enzyme]-L-cysteine + [acceptor protein]-L-lysine = [E2 ubiquitin-conjugating enzyme]-L-cysteine + N(6)-ubiquitinyl-[acceptor protein]-L-lysine.. Functionally, E3 ubiquitin-protein ligase that plays a role in the limitation of the innate immune response. Mediates inhibition of the RLR signaling pathway by ubiquitinating RIGI and IFIH1 receptors, leading to their proteasomal degradation. Also promotes the neddylation of IKBKG/NEMO, stabilizing NFKBIA, and thereby inhibiting of NF-kappa-B nuclear translocation and activation. The polypeptide is E3 ubiquitin ligase TRIM40 (Trim40) (Mus musculus (Mouse)).